Here is a 156-residue protein sequence, read N- to C-terminus: Small ribosomal subunit protein uS7 (156 aa).

The protein belongs to the universal ribosomal protein uS7 family. As to quaternary structure, part of the 30S ribosomal subunit. Contacts proteins S9 and S11.

In terms of biological role, one of the primary rRNA binding proteins, it binds directly to 16S rRNA where it nucleates assembly of the head domain of the 30S subunit. Is located at the subunit interface close to the decoding center, probably blocks exit of the E-site tRNA. The polypeptide is Small ribosomal subunit protein uS7 (Proteus mirabilis (strain HI4320)).